A 511-amino-acid chain; its full sequence is Inositol-3-phosphate synthase isozyme 1 (511 aa).

24 residues coordinate NAD(+): G71, G72, N73, N74, D144, I181, Q191, R194, T231, A232, N233, T234, G282, S283, D307, S310, N341, N342, D343, K356, A394, D395, D423, and S424.

It belongs to the myo-inositol 1-phosphate synthase family. In terms of assembly, homotrimer or homotetramer. Interacts with ATXR5 and ATXR6. Requires NAD(+) as cofactor. Expressed in siliques, leaves, roots, seed endosperm, but not in embryos. Highest expression in leaves, but restricted to vascular tissue in older leaves.

It localises to the cytoplasm. The protein localises to the cytosol. It is found in the nucleus. The enzyme catalyses D-glucose 6-phosphate = 1D-myo-inositol 3-phosphate. It functions in the pathway polyol metabolism; myo-inositol biosynthesis; myo-inositol from D-glucose 6-phosphate: step 1/2. In terms of biological role, key enzyme in myo-inositol biosynthesis pathway that catalyzes the conversion of glucose 6-phosphate to 1-myo-inositol 1-phosphate in a NAD-dependent manner. Catalyzes the majority of myo-inositol synthesis required for plant growth and development. Acts as a repressor of programmed cell death and protects plant cells against cell death under high light intensity or long days. Controls its own transcription by inhibiting ATXR6 activity. Reduces the deposition of inhibitory histone marks on its own promoter. In Arabidopsis thaliana (Mouse-ear cress), this protein is Inositol-3-phosphate synthase isozyme 1 (IPS1).